The primary structure comprises 1330 residues: Fanconi anemia group I protein homolog (1330 aa).

K522 is covalently cross-linked (Glycyl lysine isopeptide (Lys-Gly) (interchain with G-Cter in ubiquitin)). Phosphoserine is present on S555. T558 carries the phosphothreonine modification. A Phosphoserine modification is found at S729. The residue at position 948 (T948) is a Phosphothreonine. The residue at position 1122 (S1122) is a Phosphoserine. Positions 1299–1330 (EDEEDENEEGTASAHTQQDREPAKKRRKKCLS) are disordered. Over residues 1321–1330 (AKKRRKKCLS) the composition is skewed to basic residues.

Belongs to the Fanconi anemia group I protein family. In terms of assembly, homodimer. Part of a FANCI-FANCD2 heterodimeric complex that binds and scans dsDNA for DNA damage. Interacts with FANCL. Interacts with MTMR15/FAN1. Interacts with POLN. Interacts with UBL5; the interaction promotes FANCI homodimerization. Monoubiquitinated by FANCL on Lys-522 during S phase and upon genotoxic stress. Deubiquitinated by USP1 as cells enter G2/M, or once DNA repair is completed. Monoubiquitination requires the FANCA-FANCB-FANCC-FANCE-FANCF-FANCG-FANCM complex. Ubiquitination is required for binding to chromatin, DNA repair, and normal cell cycle progression. Monoubiquitination is stimulated by DNA-binding. Post-translationally, phosphorylated in response to DNA damage by ATM and/or ATR. Phosphorylation of FANCI promotes ubiquitination of FANCD2, which prevents DNA release from the FANCI-FANCD2 complex.

It localises to the nucleus. Its subcellular location is the cytoplasm. Plays an essential role in the repair of DNA double-strand breaks by homologous recombination and in the repair of interstrand DNA cross-links (ICLs) by promoting FANCD2 monoubiquitination by FANCL and participating in recruitment to DNA repair sites. The FANCI-FANCD2 complex binds and scans double-stranded DNA (dsDNA) for DNA damage; this complex stalls at DNA junctions between double-stranded DNA and single-stranded DNA. Participates in S phase and G2 phase checkpoint activation upon DNA damage. The sequence is that of Fanconi anemia group I protein homolog (Fanci) from Mus musculus (Mouse).